A 121-amino-acid polypeptide reads, in one-letter code: Small basic protein (121 aa).

3 consecutive transmembrane segments (helical) span residues tryptophan 2–isoleucine 22, tyrosine 29–leucine 49, and valine 57–valine 77.

The protein belongs to the sbp family.

The protein resides in the cell membrane. This chain is Small basic protein (sbp), found in Bacillus subtilis (strain 168).